The sequence spans 88 residues: Large ribosomal subunit protein bL27 (88 aa).

The disordered stretch occupies residues 1 to 23 (MAHKKAGGSSRNGRDSAGRRLGV).

The protein belongs to the bacterial ribosomal protein bL27 family.

In Methylorubrum extorquens (strain CM4 / NCIMB 13688) (Methylobacterium extorquens), this protein is Large ribosomal subunit protein bL27.